The following is a 316-amino-acid chain: MAQPSIGQKIVVDVPSTTANLGPGFDCLGAALDLNNRFAMRRIEGDSGRFELIIEGNEGSHLRGGPNNLIYRAAQRVWKAAGLEPVGLEAKVRLAVPPARGLGSSASAIVAGLVGANALVGEPLSKEKLLELAIDIEGHPDNVVPSLLGGLCLTAKAASQRWRVVRCVWINSVKVVVAIPSIRLSTSEARRAMPKDIPISDAVENLGALTLLLQGLRTGNGDLITDGMHDRLHEPYRWPLIKGGLDVRDAALNAGAWGCAISGAGPSVLALCPEDKGQAVSQAMVKAWEAEGVASRAPLLSIQTGGSHWQPQIEDE.

Residue 97–107 coordinates ATP; the sequence is PPARGLGSSAS.

Belongs to the GHMP kinase family. Homoserine kinase subfamily.

The protein resides in the cytoplasm. The enzyme catalyses L-homoserine + ATP = O-phospho-L-homoserine + ADP + H(+). The protein operates within amino-acid biosynthesis; L-threonine biosynthesis; L-threonine from L-aspartate: step 4/5. In terms of biological role, catalyzes the ATP-dependent phosphorylation of L-homoserine to L-homoserine phosphate. This Prochlorococcus marinus (strain MIT 9303) protein is Homoserine kinase.